The primary structure comprises 209 residues: PF03932 family protein CutC (209 aa).

Its subcellular location is the cytoplasm. This chain is PF03932 family protein CutC, found in Streptococcus pyogenes serotype M6 (strain ATCC BAA-946 / MGAS10394).